Here is a 297-residue protein sequence, read N- to C-terminus: UBX domain-containing protein 1 (297 aa).

Residue Ala-2 is modified to N-acetylalanine. One can recognise a UBA domain in the interval 2 to 42 (AELTALESLIEMGFPRGRAEKALALTGNQGIEAAMDWLMEH). The tract at residues 38-214 (WLMEHEDDPD…PPTKREYDQC (177 aa)) is disordered. Over residues 42-52 (HEDDPDVDEPL) the composition is skewed to acidic residues. Positions 43–297 (EDDPDVDEPL…VLIVAKKCPS (255 aa)) are interaction with BRCA1. Composition is skewed to basic and acidic residues over residues 86–122 (LTEEERQEQTKRMLELVAQKQREREEREEREALEREK) and 137–177 (KLQE…ERAK). Phosphoserine is present on Ser-199. Position 200 is a phosphoserine; by MAPK12 (Ser-200). Phosphothreonine is present on residues Thr-207 and Thr-229. One can recognise a UBX domain in the interval 209–291 (REYDQCRIQV…GLVPSAVLIV (83 aa)). Ser-270 carries the phosphoserine modification.

In terms of assembly, interacts with MAVS; this interaction prevents MAVS oligomerization and thus disrupts the RLR signaling pathway. Interacts with CUL1; this interaction inhibits CUL1-mediated degradation of NF-kappa-B inhibitors. Interacts with BIRC2/c-IAP1; this interaction prevents TNFalpha-stimulated RIP1 ubiquitination and subsequent NF-kappa-B activation. Component of a complex required to couple retrotranslocation, ubiquitination and deglycosylation composed of NGLY1, SAKS1, AMFR, VCP and RAD23B. Interacts with HOMER2. Interacts directly with VCP. Interacts with BRCA1 and BARD1; interaction takes place when BRCA1 is not autoubiquitinated but is strongly enhanced in the presence of autoubiquitinated BRCA1.

Its subcellular location is the cytoplasm. In terms of biological role, ubiquitin-binding protein that plays a role in the modulation of innate immune response. Blocks both the RIG-I-like receptors (RLR) and NF-kappa-B pathways. Following viral infection, UBXN1 is induced and recruited to the RLR component MAVS. In turn, interferes with MAVS oligomerization, and disrupts the MAVS/TRAF3/TRAF6 signalosome. This function probably serves as a brake to prevent excessive RLR signaling. Interferes with the TNFalpha-triggered NF-kappa-B pathway by interacting with cellular inhibitors of apoptosis proteins (cIAPs) and thereby inhibiting their recruitment to TNFR1. Also prevents the activation of NF-kappa-B by associating with CUL1 and thus inhibiting NF-kappa-B inhibitor alpha/NFKBIA degradation that remains bound to NF-kappa-B. Interacts with the BRCA1-BARD1 heterodimer and regulates its activity. Specifically binds 'Lys-6'-linked polyubiquitin chains. Interaction with autoubiquitinated BRCA1 leads to the inhibition of the E3 ubiquitin-protein ligase activity of the BRCA1-BARD1 heterodimer. Component of a complex required to couple deglycosylation and proteasome-mediated degradation of misfolded proteins in the endoplasmic reticulum that are retrotranslocated in the cytosol. The protein is UBX domain-containing protein 1 (Ubxn1) of Mus musculus (Mouse).